We begin with the raw amino-acid sequence, 636 residues long: Chaperone protein HtpG (636 aa).

Residues 1 to 344 (MTLEADKQTH…SADLSLNVSR (344 aa)) form an a; substrate-binding region. The b stretch occupies residues 345 to 561 (EILQSGPVVD…EGDLGLQMRQ (217 aa)). The c stretch occupies residues 562–636 (LLEASGQKVP…LNKLLLELSA (75 aa)).

This sequence belongs to the heat shock protein 90 family. Homodimer.

The protein resides in the cytoplasm. Molecular chaperone. Has ATPase activity. The sequence is that of Chaperone protein HtpG from Xylella fastidiosa (strain Temecula1 / ATCC 700964).